The primary structure comprises 350 residues: Neuronal-specific septin-3 (350 aa).

The span at 1–10 (MSKGLPEART) shows a compositional bias: basic and acidic residues. A disordered region spans residues 1–29 (MSKGLPEARTDAAMSELVPEPRPKPAVPM). Positions 58-331 (TGFDFNIMVV…ETYRAKRLND (274 aa)) constitute a Septin-type G domain. The segment at 68–75 (GQSGLGKS) is G1 motif. 68–75 (GQSGLGKS) provides a ligand contact to GTP. Residue S91 is modified to Phosphoserine. T102 is a GTP binding site. The G3 motif stretch occupies residues 125–128 (DTPG). The tract at residues 207–210 (AKAD) is G4 motif. Residues 208–216 (KADTMTLEE), G265, and R280 contribute to the GTP site. A disordered region spans residues 328 to 350 (RLNDNGGLPPVSVDTEESHDSNP).

It belongs to the TRAFAC class TrmE-Era-EngA-EngB-Septin-like GTPase superfamily. Septin GTPase family. Septins polymerize into heterooligomeric protein complexes that form filaments, and can associate with cellular membranes, actin filaments and microtubules. GTPase activity is required for filament formation. Post-translationally, phosphorylated by PKG on serine residues. Phosphorylated by PKG on Ser-91. In terms of tissue distribution, expressed in the brain including the cerebrum, hippocampus and cerebellum (at protein level).

It is found in the cytoplasm. It localises to the cytoskeleton. The protein resides in the synapse. Filament-forming cytoskeletal GTPase. May play a role in cytokinesis (Potential). This is Neuronal-specific septin-3 from Mus musculus (Mouse).